The following is a 443-amino-acid chain: Methylenetetrahydrofolate--tRNA-(uracil-5-)-methyltransferase TrmFO (443 aa).

8–13 (GAGLAG) lines the FAD pocket.

This sequence belongs to the MnmG family. TrmFO subfamily. FAD serves as cofactor.

The protein localises to the cytoplasm. It catalyses the reaction uridine(54) in tRNA + (6R)-5,10-methylene-5,6,7,8-tetrahydrofolate + NADH + H(+) = 5-methyluridine(54) in tRNA + (6S)-5,6,7,8-tetrahydrofolate + NAD(+). It carries out the reaction uridine(54) in tRNA + (6R)-5,10-methylene-5,6,7,8-tetrahydrofolate + NADPH + H(+) = 5-methyluridine(54) in tRNA + (6S)-5,6,7,8-tetrahydrofolate + NADP(+). Its function is as follows. Catalyzes the folate-dependent formation of 5-methyl-uridine at position 54 (M-5-U54) in all tRNAs. In Thermus thermophilus (strain ATCC 27634 / DSM 579 / HB8), this protein is Methylenetetrahydrofolate--tRNA-(uracil-5-)-methyltransferase TrmFO.